Consider the following 322-residue polypeptide: Nodulation protein Z (322 aa).

One can recognise a GT23 domain in the interval 1–314 (MYNRYVLSRR…NDPSRLVVIE (314 aa)).

Belongs to the glycosyltransferase 23 family.

Its function is as follows. Fucosyltransferase which adds the fucose moiety of the nod factor on its terminal reducing N-acetylglucosamine end. Uses GDP-fucose as the donor group. In Sinorhizobium fredii (strain NBRC 101917 / NGR234), this protein is Nodulation protein Z (nodZ).